Reading from the N-terminus, the 105-residue chain is Putative membrane protein insertion efficiency factor (105 aa).

It belongs to the UPF0161 family.

The protein resides in the cell membrane. Could be involved in insertion of integral membrane proteins into the membrane. The polypeptide is Putative membrane protein insertion efficiency factor (Bifidobacterium longum subsp. infantis (strain ATCC 15697 / DSM 20088 / JCM 1222 / NCTC 11817 / S12)).